Consider the following 618-residue polypeptide: 1-deoxy-D-xylulose-5-phosphate synthase (618 aa).

Residues histidine 76 and 117 to 119 (GHS) each bind thiamine diphosphate. Aspartate 148 is a binding site for Mg(2+). Residues 149–150 (GA), asparagine 177, tyrosine 284, and glutamate 366 each bind thiamine diphosphate. Asparagine 177 lines the Mg(2+) pocket.

Belongs to the transketolase family. DXPS subfamily. Homodimer. The cofactor is Mg(2+). Thiamine diphosphate is required as a cofactor.

It carries out the reaction D-glyceraldehyde 3-phosphate + pyruvate + H(+) = 1-deoxy-D-xylulose 5-phosphate + CO2. Its pathway is metabolic intermediate biosynthesis; 1-deoxy-D-xylulose 5-phosphate biosynthesis; 1-deoxy-D-xylulose 5-phosphate from D-glyceraldehyde 3-phosphate and pyruvate: step 1/1. Catalyzes the acyloin condensation reaction between C atoms 2 and 3 of pyruvate and glyceraldehyde 3-phosphate to yield 1-deoxy-D-xylulose-5-phosphate (DXP). The polypeptide is 1-deoxy-D-xylulose-5-phosphate synthase (Dechloromonas aromatica (strain RCB)).